The sequence spans 1237 residues: Zinc finger protein 687 (1237 aa).

Disordered regions lie at residues 1–80 (MGDM…PDIS) and 96–330 (EALA…PLKV). The segment covering 97 to 111 (ALAGGSAGDGAQAAG) has biased composition (low complexity). Phosphoserine occurs at positions 102, 129, and 140. The segment covering 132 to 144 (PSLPGTPHSPAPP) has biased composition (pro residues). T148 is modified (phosphothreonine). Residues S227, S242, S251, S253, S266, and S271 each carry the phosphoserine modification. Residues 234-244 (LAQQGSGSSPK) are compositionally biased toward polar residues. K285 participates in a covalent cross-link: Glycyl lysine isopeptide (Lys-Gly) (interchain with G-Cter in SUMO2). Over residues 297–310 (SSPGSPQSPSSGAE) the composition is skewed to low complexity. Residues K336 and K372 each participate in a glycyl lysine isopeptide (Lys-Gly) (interchain with G-Cter in SUMO2) cross-link. A Phosphoserine modification is found at S374. T377 is modified (phosphothreonine). Residues K384, K397, and K422 each participate in a glycyl lysine isopeptide (Lys-Gly) (interchain with G-Cter in SUMO2) cross-link. S433 is modified (phosphoserine). Residues K435, K439, K451, and K464 each participate in a glycyl lysine isopeptide (Lys-Gly) (interchain with G-Cter in SUMO2) cross-link. At S495 the chain carries Phosphoserine. A C2H2-type 1; degenerate zinc finger spans residues 533–552 (YRCLECGDAFSLEKSLARHY). 5 consecutive C2H2-type zinc fingers follow at residues 705-727 (NVCPTCPMMLPNRCSFSAHQRMH), 764-787 (YRCPSCSVVFGGVNSIKSHIQTSH), 792-815 (HKCPICPMAFKSGPSAHAHLYSQH), 827-849 (YKCAMCDTVFTHKPLLSSHFDQH), and 858-881 (FKCPSCPLLFAQKRTMLEHLKNTH). A compositionally biased stretch (basic and acidic residues) spans 880–890 (THQSGRLEETA). The interval 880 to 957 (THQSGRLEET…LGSKGLKGGG (78 aa)) is disordered. Residue T900 is modified to Phosphothreonine. The segment covering 915 to 925 (AAPATEESSSS) has biased composition (low complexity). Residue K954 forms a Glycyl lysine isopeptide (Lys-Gly) (interchain with G-Cter in SUMO2) linkage. 2 C2H2-type zinc fingers span residues 963-986 (WTCGLCHSWFPERDEYVAHMKKEH) and 993-1016 (FPCRLCERSFCSAPSLRRHVRVNH). K1043 participates in a covalent cross-link: Glycyl lysine isopeptide (Lys-Gly) (interchain with G-Cter in SUMO2). Residues 1051-1121 (LQLGAQSPGR…LRYRSSSSTE (71 aa)) form a disordered region. S1057 is modified (phosphoserine). The residue at position 1060 (R1060) is an Omega-N-methylarginine. 3 positions are modified to phosphoserine: S1082, S1083, and S1085. R1101 bears the Omega-N-methylarginine mark. S1106 and S1118 each carry phosphoserine. A C2H2-type 9 zinc finger spans residues 1135-1158 (QQCLDCGLCFASPGSLSRHRFISH). The tract at residues 1159–1195 (KKRRGVGKASALGLGDGEEEAPPSRSDPDGGDSPLPA) is disordered. Residues S1184, S1191, and S1211 each carry the phosphoserine modification. The C2H2-type 10 zinc-finger motif lies at 1200–1222 (LTCKVCGKSCDSPLNLKTHFRTH).

The protein belongs to the krueppel C2H2-type zinc-finger protein family. In terms of assembly, interacts with ZMYND8. As to expression, widely expressed with highest levels in obvary, muscle, blood and lung.

The protein resides in the cytoplasm. It is found in the nucleus. Functionally, may be involved in transcriptional regulation. This chain is Zinc finger protein 687 (ZNF687), found in Homo sapiens (Human).